The primary structure comprises 172 residues: Putative phosphoesterase BCAH820_1309 (172 aa).

Histidine 34 (proton donor) is an active-site residue. Short sequence motifs (HXTX) lie at residues 34-37 (HITL) and 115-118 (HLTI). Histidine 115 functions as the Proton acceptor in the catalytic mechanism.

It belongs to the 2H phosphoesterase superfamily. YjcG family.

This chain is Putative phosphoesterase BCAH820_1309, found in Bacillus cereus (strain AH820).